Consider the following 200-residue polypeptide: MTIRYPNGKRYNQASQPQKTPIKTHTYSNRGMSLEEELNETNQYYLTHNIACVHKKPTPLQIVKVDYPARSAAVVKEAYFKQPSTTDYNGVYKGKYIDFEAKETKNKTSFPLQNFHLHQIEHMKQVVAHNGIAFVIIKFTLFDEFYLLDAKHIIAFWNRQNTGGRKSITKEEIEEHGSLLSCGYHPRIDYIRVLDMVYFS.

Positions methionine 1–histidine 25 are disordered. A compositionally biased stretch (polar residues) spans arginine 10–histidine 25. Positions 85, 87, 100, and 119 each coordinate Mg(2+).

This sequence belongs to the RecU family. Mg(2+) is required as a cofactor.

Its subcellular location is the cytoplasm. It catalyses the reaction Endonucleolytic cleavage at a junction such as a reciprocal single-stranded crossover between two homologous DNA duplexes (Holliday junction).. Its function is as follows. Endonuclease that resolves Holliday junction intermediates in genetic recombination. Cleaves mobile four-strand junctions by introducing symmetrical nicks in paired strands. Promotes annealing of linear ssDNA with homologous dsDNA. Required for DNA repair, homologous recombination and chromosome segregation. The protein is Holliday junction resolvase RecU of Bacillus cereus (strain B4264).